Here is a 73-residue protein sequence, read N- to C-terminus: Large ribosomal subunit protein bL31 (73 aa).

Belongs to the bacterial ribosomal protein bL31 family. Type A subfamily. As to quaternary structure, part of the 50S ribosomal subunit.

Functionally, binds the 23S rRNA. The sequence is that of Large ribosomal subunit protein bL31 from Rhizobium johnstonii (strain DSM 114642 / LMG 32736 / 3841) (Rhizobium leguminosarum bv. viciae).